The chain runs to 444 residues: MLRNDTITAIATPPGEGSIAIVRVSGPDAISISDRIFSGNIAGYASHTAHLGTVSHNAVYIDQALVLVMRAPRSFTGEDIVEFQCHGGYFACSQIVNTLLAEGARAALPGEFSQRAFLNGKIDLIQAEAIQQLIAADNIDAFRIAQNQFQGHTSQAISSISSLIIEALAYIEVLADFPEEDIETEDSLPKHRIMEALSITDELLSSFDEGQRLAQGTSIVLAGLPNAGKSSILNALTQKNRAIVTDIPGTTRDILEENWVLQGKNLRLIDSAGLRETENLVEKEGIARAREAMSQAEGILWVVDASQPLPEFPTILYQKPTILLWNKCDIVSPPQIEVPFQQISVSAKTGEGLLELKQALQKWLNTTQLGKSSKIFLVSARHHSLLHSVYTCLTAALNGFTEHLPNECIALDLRQALHSIGNLSGSEVTENVLGEIFSKFCIGK.

R23, E82, and K121 together coordinate (6S)-5-formyl-5,6,7,8-tetrahydrofolate. Residues 216–365 (GTSIVLAGLP…LKQALQKWLN (150 aa)) enclose the TrmE-type G domain. N226 lines the K(+) pocket. GTP is bound by residues 226-231 (NAGKSS), 245-251 (TDIPGTT), and 270-273 (DSAG). S230 provides a ligand contact to Mg(2+). The K(+) site is built by T245, I247, and T250. A Mg(2+)-binding site is contributed by T251. A (6S)-5-formyl-5,6,7,8-tetrahydrofolate-binding site is contributed by K444.

Belongs to the TRAFAC class TrmE-Era-EngA-EngB-Septin-like GTPase superfamily. TrmE GTPase family. As to quaternary structure, homodimer. Heterotetramer of two MnmE and two MnmG subunits. K(+) serves as cofactor.

The protein localises to the cytoplasm. Its function is as follows. Exhibits a very high intrinsic GTPase hydrolysis rate. Involved in the addition of a carboxymethylaminomethyl (cmnm) group at the wobble position (U34) of certain tRNAs, forming tRNA-cmnm(5)s(2)U34. This Chlamydia trachomatis serovar A (strain ATCC VR-571B / DSM 19440 / HAR-13) protein is tRNA modification GTPase MnmE.